Consider the following 143-residue polypeptide: Large ribosomal subunit protein uL15 (143 aa).

Residues methionine 1–leucine 57 form a disordered region. The segment covering arginine 21–alanine 31 has biased composition (gly residues).

Belongs to the universal ribosomal protein uL15 family. As to quaternary structure, part of the 50S ribosomal subunit.

Functionally, binds to the 23S rRNA. This is Large ribosomal subunit protein uL15 from Ralstonia pickettii (strain 12J).